The sequence spans 41 residues: Photosystem I reaction center subunit IX (41 aa).

The chain crosses the membrane as a helical span at residues 7-27 (YLSTVPVVFAIWLTFTAGLII).

Belongs to the PsaJ family.

It is found in the plastid. Its subcellular location is the chloroplast thylakoid membrane. Functionally, may help in the organization of the PsaE and PsaF subunits. This chain is Photosystem I reaction center subunit IX, found in Bigelowiella natans (Pedinomonas minutissima).